Here is a 214-residue protein sequence, read N- to C-terminus: Endoplasmic reticulum vesicle protein 25 (214 aa).

Positions 1–20 (MRSISTLLFIISTFISLVSA) are cleaved as a signal peptide. Over 21-183 (LQLAIPATTN…TNESTNSRVK (163 aa)) the chain is Lumenal. A GOLD domain is found at 33–124 (PFCIRDFVQE…VREIELDVES (92 aa)). Residues 184-204 (WFSILVITSLVGLGAWQVQYL) traverse the membrane as a helical segment. Residues 205-214 (RHYFKVKHII) lie on the Cytoplasmic side of the membrane.

This sequence belongs to the EMP24/GP25L family.

It localises to the endoplasmic reticulum membrane. The protein localises to the golgi apparatus membrane. In terms of biological role, constituent of COPII-coated endoplasmic reticulum-derived transport vesicles. Required for efficient transport of a subset of secretory proteins to the Golgi. Facilitates retrograde transport from the Golgi to the endoplasmic reticulum. In Debaryomyces hansenii (strain ATCC 36239 / CBS 767 / BCRC 21394 / JCM 1990 / NBRC 0083 / IGC 2968) (Yeast), this protein is Endoplasmic reticulum vesicle protein 25 (ERV25).